Consider the following 156-residue polypeptide: MNNAIKLNSIFTELSKKKKPKLIGRGIGCGKGKTSGRGHKGQKARSGTSINGFEGGQQSIYTRLPKRGFNPIRRNICSIINVGDVQRLIEAKKIEKNSVIDKEILHKLGFIKSIKDKIKLLNKGKLNERCVFHVDFASEAAKKSVTSIGGSVEILS.

A disordered region spans residues 25–49 (RGIGCGKGKTSGRGHKGQKARSGTS). A compositionally biased stretch (basic residues) spans 34–43 (TSGRGHKGQK).

The protein belongs to the universal ribosomal protein uL15 family. In terms of assembly, part of the 50S ribosomal subunit.

Its function is as follows. Binds to the 23S rRNA. The polypeptide is Large ribosomal subunit protein uL15 (Wolbachia sp. subsp. Brugia malayi (strain TRS)).